The following is a 170-amino-acid chain: Ribosomal RNA small subunit methyltransferase G (170 aa).

Residues Gly-70, Leu-75, 120–121 (AE), and Arg-138 each bind S-adenosyl-L-methionine.

This sequence belongs to the methyltransferase superfamily. RNA methyltransferase RsmG family.

It localises to the cytoplasm. Functionally, specifically methylates the N7 position of guanine in position 518 of 16S rRNA. This is Ribosomal RNA small subunit methyltransferase G from Mycobacterium ulcerans (strain Agy99).